The following is an 807-amino-acid chain: MRLSPAPLKLSRTPALLALALPLAAALAFSDETLDKVPKSEGYCSRILRAQGTRREGYTEFSLRVEGDPDFYKPGTSYRVTLSAAPPSYFRGFTLIALRENREGDKEEDHAGTFQIIDEEETQFMSNCPVAVTESTPRRRTRIQVFWIAPPAGTGCVILKASIVQKRIIYFQDEGSLTKKLCEQDSTFDGVTDKPILDCCACGTAKYRLTFYGNWSEKTHPKDYPRRANHWSAIIGGSHSKNYVLWEYGGYASEGVKQVAELGSPVKMEEEIRQQSDEVLTVIKAKAQWPAWQPLNVRAAPSAEFSVDRTRHLMSFLTMMGPSPDWNVGLSAEDLCTKECGWVQKVVQDLIPWDAGTDSGVTYESPNKPTIPQEKIRPLTSLDHPQSPFYDPEGGSITQVARVVIERIARKGEQCNIVPDNVDDIVADLAPEEKDEDDTPETCIYSNWSPWSACSSSTCDKGKRMRQRMLKAQLDLSVPCPDTQDFQPCMGPGCSDEDGSTCTMSEWITWSPCSISCGMGMRSRERYVKQFPEDGSVCTLPTEETEKCTVNEECSPSSCLMTEWGEWDECSATCGMGMKKRHRMIKMNPADGSMCKAETSQAEKCMMPECHTIPCLLSPWSEWSDCSVTCGKGMRTRQRMLKSLAELGDCNEDLEQVEKCMLPECPIDCELTEWSQWSECNKSCGKGHVIRTRMIQMEPQFGGAPCPETVQRKKCRIRKCLRNPSIQKLRWREARESRRSEQLKEESEGEQFPGCRMRPWTAWSECTKLCGGGIQERYMTVKKRFKSSQFTSCKDKKEIRACNVHPC.

A signal peptide spans 1–28 (MRLSPAPLKLSRTPALLALALPLAAALA). The region spanning 29-194 (FSDETLDKVP…DSTFDGVTDK (166 aa)) is the Reelin domain. 17 disulfides stabilise this stretch: Cys44–Cys128, Cys156–Cys182, Cys199–Cys336, Cys200–Cys340, Cys202–Cys415, Cys443–Cys480, Cys454–Cys489, Cys459–Cys494, Cys502–Cys538, Cys513–Cys517, Cys548–Cys554, Cys559–Cys595, Cys570–Cys574, Cys605–Cys610, Cys615–Cys650, Cys626–Cys630, and Cys660–Cys665. The region spanning 195 to 388 (PILDCCACGT…LTSLDHPQSP (194 aa)) is the Spondin domain. Asn214 carries an N-linked (GlcNAc...) asparagine glycan. Ca(2+) contacts are provided by Asp325, Asp354, and Asp358. TSP type-1 domains follow at residues 442–495 (TCIY…PGCS), 501–555 (TCTM…EECS), 558–611 (SCLM…PECH), 614–666 (PCLL…PECP), 668–721 (DCEL…RKCL), and 754–806 (GCRM…NVHP). Trp448 carries C-linked (Man) tryptophan glycosylation. C-linked (Man) tryptophan; partial glycosylation is present at Trp451. A glycan (C-linked (Man) tryptophan) is linked at Trp507. C-linked (Man) tryptophan; partial glycosylation is present at Trp510. Trp564 carries a C-linked (Man) tryptophan glycan. Residue Trp620 is glycosylated (C-linked (Man) tryptophan; partial). Residue Trp623 is glycosylated (C-linked (Man) tryptophan). The C-linked (Man) tryptophan glycan is linked to Trp674. N-linked (GlcNAc...) asparagine glycosylation occurs at Asn681.

Binds to the central extracellular domain of APP and inhibits beta-secretase cleavage of APP. As to expression, highest expression in lung, lower expression in brain, heart, kidney, liver and testis, and lowest expression in pancreas, skeletal muscle and ovary. Not expressed in spleen.

Its subcellular location is the secreted. It is found in the extracellular space. The protein localises to the extracellular matrix. In terms of biological role, cell adhesion protein that promotes the attachment of spinal cord and sensory neuron cells and the outgrowth of neurites in vitro. May contribute to the growth and guidance of axons in both the spinal cord and the PNS. Major factor for vascular smooth muscle cell. The polypeptide is Spondin-1 (SPON1) (Homo sapiens (Human)).